Consider the following 264-residue polypeptide: Thymidylate synthase (264 aa).

R21 contacts dUMP. H51 provides a ligand contact to (6R)-5,10-methylene-5,6,7,8-tetrahydrofolate. 126–127 (RR) is a binding site for dUMP. The active-site Nucleophile is the C146. DUMP-binding positions include 166–169 (RSCD), N177, and 207–209 (HLY). D169 lines the (6R)-5,10-methylene-5,6,7,8-tetrahydrofolate pocket. A263 serves as a coordination point for (6R)-5,10-methylene-5,6,7,8-tetrahydrofolate.

Belongs to the thymidylate synthase family. Bacterial-type ThyA subfamily. As to quaternary structure, homodimer.

The protein localises to the cytoplasm. The enzyme catalyses dUMP + (6R)-5,10-methylene-5,6,7,8-tetrahydrofolate = 7,8-dihydrofolate + dTMP. It participates in pyrimidine metabolism; dTTP biosynthesis. Its function is as follows. Catalyzes the reductive methylation of 2'-deoxyuridine-5'-monophosphate (dUMP) to 2'-deoxythymidine-5'-monophosphate (dTMP) while utilizing 5,10-methylenetetrahydrofolate (mTHF) as the methyl donor and reductant in the reaction, yielding dihydrofolate (DHF) as a by-product. This enzymatic reaction provides an intracellular de novo source of dTMP, an essential precursor for DNA biosynthesis. In Hamiltonella defensa subsp. Acyrthosiphon pisum (strain 5AT), this protein is Thymidylate synthase.